The sequence spans 316 residues: Thioredoxin reductase (316 aa).

An FAD-binding site is contributed by 36–43; it reads ERGIPGGQ. Cysteines 135 and 138 form a disulfide. FAD is bound at residue 278–287; the sequence is DIREKSLRQI.

It belongs to the class-II pyridine nucleotide-disulfide oxidoreductase family. Homodimer. FAD serves as cofactor.

The protein localises to the cytoplasm. The catalysed reaction is [thioredoxin]-dithiol + NADP(+) = [thioredoxin]-disulfide + NADPH + H(+). This chain is Thioredoxin reductase (trxB), found in Bacillus subtilis (strain 168).